Reading from the N-terminus, the 776-residue chain is Outer capsid protein VP4 (776 aa).

The spike head stretch occupies residues 65–224 (LDGPYQPTTF…KCTEYINNGL (160 aa)). The cysteines at positions 203 and 216 are disulfide-linked. Residues 248–479 (AQPNQDIVVS…LISLVPSNDD (232 aa)) form a spike body and stalk (antigen domain) region. The DGE motif; interaction with ITGA2/ITGB1 heterodimer signature appears at 308 to 310 (DGE). A disulfide bridge connects residues Cys318 and Cys380. Residues 389–409 (IPVGNYPVMTGGAVSLHSAGV) are hydrophobic; possible role in virus entry into host cell. Residues 448 to 450 (YGL) carry the YGL motif; interaction with ITGA4 motif. A coiled-coil region spans residues 484 to 518 (IINSVTVRQDLERQLGELRDEFNNLSQQIAMSQLI). Residues 510-776 (QQIAMSQLID…IESLIMQCRL (267 aa)) form a spike foot region. The KID motif; interaction with HSPA8 motif lies at 644-646 (KID).

The protein belongs to the rotavirus VP4 family. As to quaternary structure, homotrimer. VP4 adopts a dimeric appearance above the capsid surface, while forming a trimeric base anchored inside the capsid layer. Only hints of the third molecule are observed above the capsid surface. It probably performs a series of molecular rearrangements during viral entry. Prior to trypsin cleavage, it is flexible. The priming trypsin cleavage triggers its rearrangement into rigid spikes with approximate two-fold symmetry of their protruding parts. After an unknown second triggering event, cleaved VP4 may undergo another rearrangement, in which two VP5* subunits fold back on themselves and join a third subunit to form a tightly associated trimer, shaped like a folded umbrella. Interacts with VP6. Interacts with VP7. Homotrimer. The trimer is coiled-coil stabilized by its C-terminus, however, its N-terminus, known as antigen domain or 'body', seems to be flexible allowing it to self-associate either as a dimer or a trimer. Post-translationally, proteolytic cleavage by trypsin results in activation of VP4 functions and greatly increases infectivity. The penetration into the host cell is dependent on trypsin treatment of VP4. It produces two peptides, VP5* and VP8* that remain associated with the virion. Cleavage of VP4 by trypsin probably occurs in vivo in the lumen of the intestine prior to infection of enterocytes. Trypsin seems to be incorporated into the three-layered viral particles but remains inactive as long as the viral outer capsid is intact and would only be activated upon the solubilization of the latter.

Its subcellular location is the virion. It localises to the host rough endoplasmic reticulum. The protein resides in the host cell membrane. The protein localises to the host cytoplasm. It is found in the host cytoskeleton. Its subcellular location is the host endoplasmic reticulum-Golgi intermediate compartment. Spike-forming protein that mediates virion attachment to the host epithelial cell receptors and plays a major role in cell penetration, determination of host range restriction and virulence. Rotavirus attachment and entry into the host cell probably involves multiple sequential contacts between the outer capsid proteins VP4 and VP7, and the cell receptors. It is subsequently lost, together with VP7, following virus entry into the host cell. Following entry into the host cell, low intracellular or intravesicular Ca(2+) concentration probably causes the calcium-stabilized VP7 trimers to dissociate from the virion. This step is probably necessary for the membrane-disrupting entry step and the release of VP4, which is locked onto the virion by VP7. During the virus exit from the host cell, VP4 seems to be required to target the newly formed virions to the host cell lipid rafts. Its function is as follows. Forms the spike 'foot' and 'body' and acts as a membrane permeabilization protein that mediates release of viral particles from endosomal compartments into the cytoplasm. During entry, the part of VP5* that protrudes from the virus folds back on itself and reorganizes from a local dimer to a trimer. This reorganization may be linked to membrane penetration by exposing VP5* hydrophobic region. In integrin-dependent strains, VP5* targets the integrin heterodimer ITGA2/ITGB1 for cell attachment. In terms of biological role, forms the head of the spikes and mediates the recognition of specific host cell surface glycans. It is the viral hemagglutinin and an important target of neutralizing antibodies. In sialic acid-dependent strains, VP8* binds to host cell sialic acid, most probably a ganglioside, providing the initial contact. In some other strains, VP8* mediates the attachment to histo-blood group antigens (HBGAs) for viral entry. The chain is Outer capsid protein VP4 from Rotavirus A (strain RVA/Cow/Canada/C486/1977/G6P6[1]) (RV-A).